The following is a 125-amino-acid chain: Cytochrome c2 (125 aa).

The N-terminal stretch at 1-21 is a signal peptide; sequence MKAIKIAMVGAALVWSASAYA. In terms of domain architecture, Cytochrome c spans 23-123; sequence GDPVKGEQVF…DVIAFLATQH (101 aa). Residues Cys-35, Cys-38, His-39, and Met-101 each coordinate heme c.

It belongs to the cytochrome c family. Binds 1 heme c group covalently per subunit.

Its function is as follows. Cytochrome c2 is found mainly in purple, non-sulfur, photosynthetic bacteria where it functions as the electron donor to the oxidized bacteriochlorophyll in the photophosphorylation pathway. However, it may also have a role in the respiratory chain and is found in some non-photosynthetic bacteria. The polypeptide is Cytochrome c2 (Rhodomicrobium vannielii (strain ATCC 17100 / DSM 162 / LMG 4299 / NCIMB 10020 / ATH 3.1.1)).